The chain runs to 451 residues: Oxygen-independent coproporphyrinogen III oxidase (451 aa).

The region spanning 45–278 (IPAGAAISLY…FETARELFLA (234 aa)) is the Radical SAM core domain. Position 54 (Tyr-54) interacts with S-adenosyl-L-methionine. [4Fe-4S] cluster is bound by residues Cys-60 and Cys-64. Residue Phe-66 coordinates S-adenosyl-L-methionine. Cys-67 serves as a coordination point for [4Fe-4S] cluster. Residues Gly-111, 112–113 (GT), Glu-144, Gln-171, Arg-183, Asp-208, Ala-242, and Ile-328 contribute to the S-adenosyl-L-methionine site.

It belongs to the anaerobic coproporphyrinogen-III oxidase family. Monomer. [4Fe-4S] cluster serves as cofactor.

It is found in the cytoplasm. It carries out the reaction coproporphyrinogen III + 2 S-adenosyl-L-methionine = protoporphyrinogen IX + 2 5'-deoxyadenosine + 2 L-methionine + 2 CO2. It participates in porphyrin-containing compound metabolism; protoporphyrin-IX biosynthesis; protoporphyrinogen-IX from coproporphyrinogen-III (AdoMet route): step 1/1. Functionally, involved in the heme biosynthesis. Catalyzes the anaerobic oxidative decarboxylation of propionate groups of rings A and B of coproporphyrinogen III to yield the vinyl groups in protoporphyrinogen IX. This is Oxygen-independent coproporphyrinogen III oxidase (hemN) from Paracoccus denitrificans (strain Pd 1222).